Reading from the N-terminus, the 205-residue chain is Small ribosomal subunit protein uS4 (205 aa).

Residues 18 to 46 (NIWGRPKSPVNRREYGPGQHGQRRKGKLS) form a disordered region. In terms of domain architecture, S4 RNA-binding spans 94 to 157 (RRLDTVVYRA…KQLAFVLEAS (64 aa)).

This sequence belongs to the universal ribosomal protein uS4 family. In terms of assembly, part of the 30S ribosomal subunit. Contacts protein S5. The interaction surface between S4 and S5 is involved in control of translational fidelity.

In terms of biological role, one of the primary rRNA binding proteins, it binds directly to 16S rRNA where it nucleates assembly of the body of the 30S subunit. Functionally, with S5 and S12 plays an important role in translational accuracy. This is Small ribosomal subunit protein uS4 from Rhodopseudomonas palustris (strain HaA2).